The chain runs to 218 residues: Pyridoxine/pyridoxamine 5'-phosphate oxidase (218 aa).

Residues 12-15 (RLSY) and Arg70 contribute to the substrate site. Residues 65–70 (RTVLLR), 80–81 (YT), Lys87, and Gln109 contribute to the FMN site. Residues Tyr127, Arg131, and Ser135 each contribute to the substrate site. FMN-binding positions include 145 to 146 (QS) and Trp191. 197 to 199 (RLH) contacts substrate. Arg201 lines the FMN pocket.

It belongs to the pyridoxamine 5'-phosphate oxidase family. Homodimer. It depends on FMN as a cofactor.

The catalysed reaction is pyridoxamine 5'-phosphate + O2 + H2O = pyridoxal 5'-phosphate + H2O2 + NH4(+). It carries out the reaction pyridoxine 5'-phosphate + O2 = pyridoxal 5'-phosphate + H2O2. It participates in cofactor metabolism; pyridoxal 5'-phosphate salvage; pyridoxal 5'-phosphate from pyridoxamine 5'-phosphate: step 1/1. Its pathway is cofactor metabolism; pyridoxal 5'-phosphate salvage; pyridoxal 5'-phosphate from pyridoxine 5'-phosphate: step 1/1. Its function is as follows. Catalyzes the oxidation of either pyridoxine 5'-phosphate (PNP) or pyridoxamine 5'-phosphate (PMP) into pyridoxal 5'-phosphate (PLP). The sequence is that of Pyridoxine/pyridoxamine 5'-phosphate oxidase from Acinetobacter baumannii (strain AB0057).